The following is a 338-amino-acid chain: Phosphonates-binding periplasmic protein (338 aa).

The N-terminal stretch at 1-26 (MNAKIIASLAFTSMFSLSTLLSPAHA) is a signal peptide.

It belongs to the phosphate/phosphite/phosphonate binding protein family. In terms of assembly, the complex is composed of two ATP-binding proteins (PhnC), two transmembrane proteins (PhnE) and a solute-binding protein (PhnD).

Its subcellular location is the periplasm. Phosphonate binding protein that is part of the phosphonate uptake system. Exhibits high affinity for 2-aminoethylphosphonate, and somewhat less affinity to ethylphosphonate, methylphosphonate, phosphonoacetate and phenylphosphonate. The sequence is that of Phosphonates-binding periplasmic protein (phnD) from Escherichia coli (strain K12).